We begin with the raw amino-acid sequence, 296 residues long: MSITSIINNLIDIITLYIRIFYVIYYIAIKSKNQICIANILYTSIKFYYTDIIDAVLKRGIDPNIPFPLSENSYVNPLIYAIECDNHDAILSLIRYGADVNTYSNYLVITPLYISVLHGCPKCVEILLYYGANINIVTYKMVTPIELASRICYNNLAFMVCDRTITNIPKKITYNFEIMKILVSHFILQASNDRLNNRHNKYFSEGYNKNKMLVSTSIILTYFKKQCIEDIDIMKNIKLGDDSFLDILVERNTMKLSTYISNQDILDIPKTVKVYNTRINMLLDEAIIYNNINIIL.

ANK repeat units lie at residues 73–102 and 107–136; these read SYVN…DVNT and LVIT…NINI.

The protein is Putative ankyrin repeat protein FPV216 of Fowlpox virus (strain NVSL) (FPV).